We begin with the raw amino-acid sequence, 432 residues long: MFKPNYHFFPITGWMNDPNGLIFWKGKYHMFYQYNPRKPEWGNICWGHAVSDDLVHWRHLPVALYPDDETHGVFSGSAVEKDGKMFLVYTYYRDPTHNKGEKETQCVAMSENGLDFVKYDGNPVISKPPEEGTHAFRDPKVNRSNGEWRMVLGSGKDEKIGRVLLYTSDDLFHWKYEGVIFEDETTKEIECPDLVRIGEKDILIYSITSTNSVLFSMGELKEGKLNVEKRGLLDHGTDFYAAQTFFGTDRVVVIGWLQSWLRTGLYPTKREGWNGVMSLPRELYVENNELKVKPVDELLALRKRKVFETAKSGTFLLDVKENSYEIVCEFSGEIELRMGNESEEVVITKSRDELIVDTTRSGVSGGEVRKSTVEDEATNRIRAFLDSCSVEFFFNDSIAFSFRIHPENVYNILSVKSNQVKLEVFELENIWL.

Substrate-binding positions include 14–17 (WMND), glutamine 33, tryptophan 41, 74–75 (FS), tyrosine 92, 137–138 (RD), 188–190 (EIE), threonine 208, and tryptophan 260. The active site involves aspartate 17.

It belongs to the glycosyl hydrolase 32 family.

It catalyses the reaction Hydrolysis of terminal non-reducing beta-D-fructofuranoside residues in beta-D-fructofuranosides.. Hydrolysis of sucrose, raffinose, inulin and levan. Specific for the fructose moiety and the beta-anomeric configuration of the glycosidic linkages of its substrates. The enzyme released fructose from sucrose and raffinose, and the fructose polymer inulin is hydrolyzed quantitatively in an exo-type fashion. The polypeptide is Beta-fructosidase (bfrA) (Thermotoga maritima (strain ATCC 43589 / DSM 3109 / JCM 10099 / NBRC 100826 / MSB8)).